The sequence spans 237 residues: Orotidine 5'-phosphate decarboxylase (237 aa).

Substrate is bound by residues D10, K32, 59–68 (DLKLHDIPNT), T118, R180, Q189, G209, and R210. K61 acts as the Proton donor in catalysis.

This sequence belongs to the OMP decarboxylase family. Type 1 subfamily. Homodimer.

It catalyses the reaction orotidine 5'-phosphate + H(+) = UMP + CO2. It functions in the pathway pyrimidine metabolism; UMP biosynthesis via de novo pathway; UMP from orotate: step 2/2. Functionally, catalyzes the decarboxylation of orotidine 5'-monophosphate (OMP) to uridine 5'-monophosphate (UMP). This is Orotidine 5'-phosphate decarboxylase from Fusobacterium nucleatum subsp. nucleatum (strain ATCC 25586 / DSM 15643 / BCRC 10681 / CIP 101130 / JCM 8532 / KCTC 2640 / LMG 13131 / VPI 4355).